The primary structure comprises 518 residues: Bifunctional purine biosynthesis protein PurH (518 aa).

One can recognise an MGS-like domain in the interval 1 to 146; the sequence is MSPIALLSVS…KNHQDVLVVT (146 aa).

This sequence belongs to the PurH family.

The catalysed reaction is (6R)-10-formyltetrahydrofolate + 5-amino-1-(5-phospho-beta-D-ribosyl)imidazole-4-carboxamide = 5-formamido-1-(5-phospho-D-ribosyl)imidazole-4-carboxamide + (6S)-5,6,7,8-tetrahydrofolate. It carries out the reaction IMP + H2O = 5-formamido-1-(5-phospho-D-ribosyl)imidazole-4-carboxamide. It functions in the pathway purine metabolism; IMP biosynthesis via de novo pathway; 5-formamido-1-(5-phospho-D-ribosyl)imidazole-4-carboxamide from 5-amino-1-(5-phospho-D-ribosyl)imidazole-4-carboxamide (10-formyl THF route): step 1/1. The protein operates within purine metabolism; IMP biosynthesis via de novo pathway; IMP from 5-formamido-1-(5-phospho-D-ribosyl)imidazole-4-carboxamide: step 1/1. This is Bifunctional purine biosynthesis protein PurH from Prochlorococcus marinus (strain NATL1A).